An 872-amino-acid polypeptide reads, in one-letter code: Leucine--tRNA ligase (872 aa).

The 'HIGH' region signature appears at 56–66; the sequence is PYPSGNLHMGH. The short motif at 629–633 is the 'KMSKS' region element; it reads KMSKS. Lysine 632 is a binding site for ATP.

Belongs to the class-I aminoacyl-tRNA synthetase family.

Its subcellular location is the cytoplasm. The enzyme catalyses tRNA(Leu) + L-leucine + ATP = L-leucyl-tRNA(Leu) + AMP + diphosphate. The sequence is that of Leucine--tRNA ligase from Prochlorococcus marinus (strain MIT 9211).